Consider the following 148-residue polypeptide: Trypsin inhibitor CMe (148 aa).

Positions 1 to 24 are cleaved as a signal peptide; sequence MAFKYQLLLSAAVMLAILVATATS.

Belongs to the protease inhibitor I6 (cereal trypsin/alpha-amylase inhibitor) family. In terms of processing, five disulfide bonds, which are essential for the inhibitor activity, are probably present. As to expression, expressed in the developing endosperm. Not detected in embryo, aleurone, coleoptile, roots and leaves.

The protein localises to the secreted. In terms of biological role, inhibits trypsin in vitro. Probably plays a protective role through inhibition of insect midgut proteases. The sequence is that of Trypsin inhibitor CMe (ITR1) from Hordeum vulgare (Barley).